The primary structure comprises 472 residues: D-inositol 3-phosphate glycosyltransferase (472 aa).

1D-myo-inositol 3-phosphate is bound at residue H48. Residues Q54–P55 and G62 contribute to the UDP-N-acetyl-alpha-D-glucosamine site. 1D-myo-inositol 3-phosphate contacts are provided by residues D59–N64, K117, Y150, T174, and R194. 3 residues coordinate UDP-N-acetyl-alpha-D-glucosamine: R282, K287, and V348. The Mg(2+) site is built by F357, R358, and A360. The UDP-N-acetyl-alpha-D-glucosamine site is built by E370 and E378. Residue T384 coordinates Mg(2+).

This sequence belongs to the glycosyltransferase group 1 family. MshA subfamily. Homodimer.

It catalyses the reaction 1D-myo-inositol 3-phosphate + UDP-N-acetyl-alpha-D-glucosamine = 1D-myo-inositol 2-acetamido-2-deoxy-alpha-D-glucopyranoside 3-phosphate + UDP + H(+). Its function is as follows. Catalyzes the transfer of a N-acetyl-glucosamine moiety to 1D-myo-inositol 3-phosphate to produce 1D-myo-inositol 2-acetamido-2-deoxy-glucopyranoside 3-phosphate in the mycothiol biosynthesis pathway. The polypeptide is D-inositol 3-phosphate glycosyltransferase (Streptomyces griseus subsp. griseus (strain JCM 4626 / CBS 651.72 / NBRC 13350 / KCC S-0626 / ISP 5235)).